Consider the following 813-residue polypeptide: Ribosome-releasing factor 2, mitochondrial (813 aa).

Residues 1–20 constitute a mitochondrion transit peptide; sequence MLRIVWKPLKIRLPVWRRYQ. One can recognise a tr-type G domain in the interval 26-314; sequence NSIRNVGIIA…AIIDYLPSPV (289 aa). Residues 35 to 42, 99 to 103, and 153 to 156 each bind GTP; these read AHIDAGKT, DTPGH, and NKMD.

This sequence belongs to the TRAFAC class translation factor GTPase superfamily. Classic translation factor GTPase family. EF-G/EF-2 subfamily.

Its subcellular location is the mitochondrion. Its function is as follows. Mitochondrial GTPase that mediates the disassembly of ribosomes from messenger RNA at the termination of mitochondrial protein biosynthesis. Not involved in the GTP-dependent ribosomal translocation step during translation elongation. The polypeptide is Ribosome-releasing factor 2, mitochondrial (mef2) (Schizosaccharomyces pombe (strain 972 / ATCC 24843) (Fission yeast)).